The primary structure comprises 401 residues: Probable tRNA sulfurtransferase (401 aa).

A THUMP domain is found at 60–165 (EPISEQLKGV…EQATYITFKD (106 aa)). Residues 183 to 184 (ML), 208 to 209 (HF), R265, G287, and Q296 contribute to the ATP site.

This sequence belongs to the ThiI family.

The protein localises to the cytoplasm. The enzyme catalyses [ThiI sulfur-carrier protein]-S-sulfanyl-L-cysteine + a uridine in tRNA + 2 reduced [2Fe-2S]-[ferredoxin] + ATP + H(+) = [ThiI sulfur-carrier protein]-L-cysteine + a 4-thiouridine in tRNA + 2 oxidized [2Fe-2S]-[ferredoxin] + AMP + diphosphate. It carries out the reaction [ThiS sulfur-carrier protein]-C-terminal Gly-Gly-AMP + S-sulfanyl-L-cysteinyl-[cysteine desulfurase] + AH2 = [ThiS sulfur-carrier protein]-C-terminal-Gly-aminoethanethioate + L-cysteinyl-[cysteine desulfurase] + A + AMP + 2 H(+). It functions in the pathway cofactor biosynthesis; thiamine diphosphate biosynthesis. Its function is as follows. Catalyzes the ATP-dependent transfer of a sulfur to tRNA to produce 4-thiouridine in position 8 of tRNAs, which functions as a near-UV photosensor. Also catalyzes the transfer of sulfur to the sulfur carrier protein ThiS, forming ThiS-thiocarboxylate. This is a step in the synthesis of thiazole, in the thiamine biosynthesis pathway. The sulfur is donated as persulfide by IscS. The protein is Probable tRNA sulfurtransferase of Bacillus pumilus (strain SAFR-032).